A 257-amino-acid chain; its full sequence is Insulin-induced gene 1 protein (257 aa).

At 1-64 the chain is on the cytoplasmic side; that stretch reads MPRLHDHVWS…ARPGSWHHDL (64 aa). Positions 32 to 54 are disordered; that stretch reads CPQGSGAPEPAPRSPRAGTAGCG. The helical transmembrane segment at 65 to 87 threads the bilayer; it reads VQRSLVLFSFGVVLALVLNLLQI. Residues 88–106 are Extracellular-facing; that stretch reads QRNVTLFPDEVIATIFSSA. The helical transmembrane segment at 107 to 124 threads the bilayer; it reads WWVPPCCGTAAAVVGLLY. The Cytoplasmic portion of the chain corresponds to 125-139; that stretch reads PCIDSHLGEPHKFKR. Glycyl lysine isopeptide (Lys-Gly) (interchain with G-Cter in ubiquitin) cross-links involve residues Lys-136 and Lys-138. Residues 140 to 162 form a helical membrane-spanning segment; sequence EWASVMRCIAVFVGINHASAKLD. Over 163–165 the chain is Extracellular; sequence FAN. A helical membrane pass occupies residues 166-184; that stretch reads NVQLSLTLAALSLGLWWTF. At 185–189 the chain is on the cytoplasmic side; it reads DRSRS. Position 187 is a phosphoserine (Ser-187). A helical membrane pass occupies residues 190 to 211; sequence GLGLGITIAFLATLITQFLVYN. Residues 212 to 225 are Extracellular-facing; sequence GVYQYTSPDFLYIR. A helical transmembrane segment spans residues 226 to 243; the sequence is SWLPCIFFSGGVTVGNIG. Over 244–257 the chain is Cytoplasmic; it reads RQLAMGVPEKPHSD. The short motif at 251–257 is the KxHxx element; that stretch reads PEKPHSD.

Belongs to the INSIG family. Interacts with SCAP; interaction is direct and only takes place in the presence of sterols; it prevents interaction between SCAP and the coat protein complex II (COPII). Associates with the SCAP-SREBP complex (composed of SCAP and SREBF1/SREBP1 or SREBF2/SREBP2); association is mediated via its interaction with SCAP and only takes place in the presence of sterols. Interaction with SCAP is mutually exclusive with PAQR3. Interacts with HMGCR (via its SSD); the interaction, accelerated by sterols, leads to the recruitment of HMGCR to AMFR/gp78 for its ubiquitination by the sterol-mediated ERAD pathway. Interacts with AMFR/gp78 (via its membrane domain); the interaction recruits HMCR at the ER membrane for its ubiquitination and degradation by the sterol-mediated ERAD pathway. Interacts with SOAT2/ACAT2; leading to promote recruitment of AMFR/gp78 and subsequent ubiquitination of SOAT2/ACAT2. Interacts with RNF139. Interacts with RNF145. Post-translationally, phosphorylation at Ser-187 by PCK1 reduces binding to oxysterol, disrupting the interaction between INSIG1 and SCAP, thereby promoting nuclear translocation of SREBP proteins (SREBF1/SREBP1 or SREBF2/SREBP2) and subsequent transcription of downstream lipogenesis-related genes. In terms of processing, ubiquitinated by AMFR/gp78 in response to sterol deprivation, leading to its degradation: when the SCAP-SREBP complex becomes dissociated from INSIG1, INSIG1 is then ubiquitinated and degraded in proteasomes. Although ubiquitination is required for rapid INSIG1 degradation, it is not required for release of the SCAP-SREBP complex. Ubiquitinated by RNF139.

Its subcellular location is the endoplasmic reticulum membrane. Oxysterol-binding protein that mediates feedback control of cholesterol synthesis by controlling both endoplasmic reticulum to Golgi transport of SCAP and degradation of HMGCR. Acts as a negative regulator of cholesterol biosynthesis by mediating the retention of the SCAP-SREBP complex in the endoplasmic reticulum, thereby blocking the processing of sterol regulatory element-binding proteins (SREBPs) SREBF1/SREBP1 and SREBF2/SREBP2. Binds oxysterol, including 25-hydroxycholesterol, regulating interaction with SCAP and retention of the SCAP-SREBP complex in the endoplasmic reticulum. In presence of oxysterol, interacts with SCAP, retaining the SCAP-SREBP complex in the endoplasmic reticulum, thereby preventing SCAP from escorting SREBF1/SREBP1 and SREBF2/SREBP2 to the Golgi. Sterol deprivation or phosphorylation by PCK1 reduce oxysterol-binding, disrupting the interaction between INSIG1 and SCAP, thereby promoting Golgi transport of the SCAP-SREBP complex, followed by processing and nuclear translocation of SREBF1/SREBP1 and SREBF2/SREBP2. Also regulates cholesterol synthesis by regulating degradation of HMGCR: initiates the sterol-mediated ubiquitin-mediated endoplasmic reticulum-associated degradation (ERAD) of HMGCR via recruitment of the reductase to the ubiquitin ligases AMFR/gp78 and/or RNF139. Also regulates degradation of SOAT2/ACAT2 when the lipid levels are low: initiates the ubiquitin-mediated degradation of SOAT2/ACAT2 via recruitment of the ubiquitin ligases AMFR/gp78. The polypeptide is Insulin-induced gene 1 protein (Cricetulus griseus (Chinese hamster)).